Here is a 627-residue protein sequence, read N- to C-terminus: Glutamine--fructose-6-phosphate aminotransferase [isomerizing] (627 aa).

The active-site Nucleophile; for GATase activity is Cys-2. One can recognise a Glutamine amidotransferase type-2 domain in the interval 2 to 224; sequence CGIVGYIGTQ…NGEIARLTPL (223 aa). SIS domains lie at 293–442 and 476–617; these read LPEN…HRQT and LAHE…VDQP. Lys-622 (for Fru-6P isomerization activity) is an active-site residue.

In terms of assembly, homodimer.

Its subcellular location is the cytoplasm. It carries out the reaction D-fructose 6-phosphate + L-glutamine = D-glucosamine 6-phosphate + L-glutamate. Functionally, catalyzes the first step in hexosamine metabolism, converting fructose-6P into glucosamine-6P using glutamine as a nitrogen source. The sequence is that of Glutamine--fructose-6-phosphate aminotransferase [isomerizing] from Nostoc sp. (strain PCC 9229).